The chain runs to 492 residues: KRAB-A domain-containing protein 2 (492 aa).

Residues Leu-36 to Thr-117 form the KRAB domain. Ser-115 carries the phosphoserine modification. Residue Thr-117 is modified to Phosphothreonine. The region spanning Arg-247–Lys-415 is the Integrase catalytic domain. A coiled-coil region spans residues Arg-427–Arg-457. Residues Glu-455–Ser-465 show a composition bias toward basic and acidic residues. The disordered stretch occupies residues Glu-455–Trp-492. Positions Glu-479–Trp-492 are enriched in polar residues.

The polypeptide is KRAB-A domain-containing protein 2 (KRBA2) (Homo sapiens (Human)).